The primary structure comprises 462 residues: RuvB-like 2 (462 aa).

76-83 (GQPGTGKT) lines the ATP pocket.

This sequence belongs to the RuvB family. Forms homohexameric rings. Can form a dodecamer with ruvbl2 made of two stacked hexameric rings. Is a component of the RNA polymerase II holoenzyme complex. Component of the chromatin-remodeling Ino80 complex. Component of some MLL1/MLL complex.

The protein resides in the nucleus. It localises to the dynein axonemal particle. The catalysed reaction is ATP + H2O = ADP + phosphate + H(+). In terms of biological role, has single-stranded DNA-stimulated ATPase and ATP-dependent DNA helicase (5' to 3') activity suggesting a role in nuclear processes such as recombination and transcription. Proposed core component of the chromatin remodeling INO80 complex which exhibits DNA- and nucleosome-activated ATPase activity and catalyzes ATP-dependent nucleosome sliding. Involved in the endoplasmic reticulum (ER)-associated degradation (ERAD) pathway where it negatively regulates expression of ER stress response genes. The chain is RuvB-like 2 (ruvbl2) from Xenopus laevis (African clawed frog).